The primary structure comprises 284 residues: 2-dehydro-3-deoxyphosphooctonate aldolase (284 aa).

It belongs to the KdsA family.

It localises to the cytoplasm. The enzyme catalyses D-arabinose 5-phosphate + phosphoenolpyruvate + H2O = 3-deoxy-alpha-D-manno-2-octulosonate-8-phosphate + phosphate. It functions in the pathway carbohydrate biosynthesis; 3-deoxy-D-manno-octulosonate biosynthesis; 3-deoxy-D-manno-octulosonate from D-ribulose 5-phosphate: step 2/3. Its pathway is bacterial outer membrane biogenesis; lipopolysaccharide biosynthesis. This is 2-dehydro-3-deoxyphosphooctonate aldolase from Pseudoalteromonas translucida (strain TAC 125).